Here is a 277-residue protein sequence, read N- to C-terminus: Phosphoenolpyruvate synthase regulatory protein (277 aa).

An ADP-binding site is contributed by 157–164 (GVSRCGKT).

This sequence belongs to the pyruvate, phosphate/water dikinase regulatory protein family. PSRP subfamily.

The enzyme catalyses [pyruvate, water dikinase] + ADP = [pyruvate, water dikinase]-phosphate + AMP + H(+). The catalysed reaction is [pyruvate, water dikinase]-phosphate + phosphate + H(+) = [pyruvate, water dikinase] + diphosphate. Its function is as follows. Bifunctional serine/threonine kinase and phosphorylase involved in the regulation of the phosphoenolpyruvate synthase (PEPS) by catalyzing its phosphorylation/dephosphorylation. The polypeptide is Phosphoenolpyruvate synthase regulatory protein (Escherichia coli O6:K15:H31 (strain 536 / UPEC)).